Here is a 1231-residue protein sequence, read N- to C-terminus: Fanconi anemia group J protein homolog (1231 aa).

Positions G11–C448 constitute a Helicase ATP-binding domain. S46–S53 serves as a coordination point for ATP. 2 disordered regions span residues T104–S126 and Q147–L166. Over residues Q152–L166 the composition is skewed to basic and acidic residues. Residues R155 to C173 carry the Nuclear localization signal motif. Residues C291, C304, C316, and C356 each contribute to the [4Fe-4S] cluster site. The short motif at D399–H402 is the DEAH box element. Over residues S890–N903 the composition is skewed to polar residues. 3 disordered regions span residues S890–S924, V936–I956, and G1195–D1231. Low complexity-rich tracts occupy residues S909 to S924 and T940 to P954. A compositionally biased stretch (basic and acidic residues) spans K1206 to L1217.

It belongs to the DEAD box helicase family. DEAH subfamily. The cofactor is [4Fe-4S] cluster.

It localises to the nucleus. It carries out the reaction Couples ATP hydrolysis with the unwinding of duplex DNA at the replication fork by translocating in the 5'-3' direction. This creates two antiparallel DNA single strands (ssDNA). The leading ssDNA polymer is the template for DNA polymerase III holoenzyme which synthesizes a continuous strand.. The catalysed reaction is ATP + H2O = ADP + phosphate + H(+). DNA-dependent helicase and 5' to 3' DNA helicase required for the maintenance of chromosomal stability. Involved in the repair of DNA double-strand breaks by homologous recombination. Involved in the repair of abasic sites at replication forks by promoting the degradation of DNA-protein cross-links: acts by catalyzing unfolding of HMCES DNA-protein cross-link via its helicase activity, exposing the underlying DNA and enabling cleavage of the DNA-protein adduct by the SPRTN metalloprotease. This is Fanconi anemia group J protein homolog (brip1.L) from Xenopus laevis (African clawed frog).